The primary structure comprises 679 residues: UvrABC system protein B (679 aa).

The 152-residue stretch at 25 to 176 (YGVNQGKQYQ…NVRESLRELV (152 aa)) folds into the Helicase ATP-binding domain. 38–45 (GATGTGKT) contacts ATP. The short motif at 91-114 (YYDYYQPEAYVPVSDTYIAKTSSV) is the Beta-hairpin element. The Helicase C-terminal domain occupies 429–591 (QIDDLLDEIR…IIPKPAGKKP (163 aa)). A UVR domain is found at 639–674 (PEIIDKLEGKMNLAAEELDFEQAAKLRDRIRQLRKK).

It belongs to the UvrB family. In terms of assembly, forms a heterotetramer with UvrA during the search for lesions. Interacts with UvrC in an incision complex.

Its subcellular location is the cytoplasm. The UvrABC repair system catalyzes the recognition and processing of DNA lesions. A damage recognition complex composed of 2 UvrA and 2 UvrB subunits scans DNA for abnormalities. Upon binding of the UvrA(2)B(2) complex to a putative damaged site, the DNA wraps around one UvrB monomer. DNA wrap is dependent on ATP binding by UvrB and probably causes local melting of the DNA helix, facilitating insertion of UvrB beta-hairpin between the DNA strands. Then UvrB probes one DNA strand for the presence of a lesion. If a lesion is found the UvrA subunits dissociate and the UvrB-DNA preincision complex is formed. This complex is subsequently bound by UvrC and the second UvrB is released. If no lesion is found, the DNA wraps around the other UvrB subunit that will check the other stand for damage. This chain is UvrABC system protein B, found in Prochlorococcus marinus (strain MIT 9211).